Here is a 548-residue protein sequence, read N- to C-terminus: Membrane protein insertase YidC (548 aa).

Residues 6–26 traverse the membrane as a helical segment; that stretch reads NLLVIALLFVSFMIWQAWEQD. A disordered region spans residues 28-55; that stretch reads NPQPQAQQTTQTTTTAAGSAADQGVPAS. Residues 30-50 show a composition bias toward low complexity; sequence QPQAQQTTQTTTTAAGSAADQ. Helical transmembrane passes span 350-370, 420-440, 458-478, and 499-519; these read FVGNWGFSIIIITFIVRGIMY, LGGCFPLLIQMPIFLALYYML, LSAQDPYYILPILMGVTMFFI, and PVIFTVFFLWFPSGLVLYYIV.

Belongs to the OXA1/ALB3/YidC family. Type 1 subfamily. In terms of assembly, interacts with the Sec translocase complex via SecD. Specifically interacts with transmembrane segments of nascent integral membrane proteins during membrane integration.

The protein localises to the cell inner membrane. Its function is as follows. Required for the insertion and/or proper folding and/or complex formation of integral membrane proteins into the membrane. Involved in integration of membrane proteins that insert both dependently and independently of the Sec translocase complex, as well as at least some lipoproteins. Aids folding of multispanning membrane proteins. In Escherichia coli O127:H6 (strain E2348/69 / EPEC), this protein is Membrane protein insertase YidC.